Consider the following 454-residue polypeptide: MSMVIGIGDLLVGYYWQWRDESQVEGKFMFYRAAKKTTPVKYQYTSNLSRCFLVFGIEPKPNKSGNFNNTMPDTEHSGDTTVNQVETIVTTVVVEQQVPTLVALDSLINENLKLASASQSSGWGFAHGLLVGQLSVVAVLAFFIKFFIFGNSSMARPLMVAPLINRKPAGVYKKGRAKSFSEVEDYDSETSSTQILDKTYYDVKTHQSESLDWFNVLVAQSIAQFRYEALNNDNIYHSLSDALSSSNLPDYLDKITITEINIGDDFPIFSNCRIKHSPNNSNRLEAKIDVDVADTLTLGIETQLLLNQPKPFTAVLPVQLSVSIVRFSACLTVSLISTADEEFQSSIKCVEDSENAIGDYEDDDDEFGGGAALMFSFSPDFRLEFEVKSLIGARSKLENVPLIGNLIEEKLKSWFLERCVEPRFQLIELPSMWPRKKNTRKPVDSESETAVDSN.

At 1–128 (MSMVIGIGDL…QSSGWGFAHG (128 aa)) the chain is on the lumenal side. A helical transmembrane segment spans residues 129-149 (LLVGQLSVVAVLAFFIKFFIF). Residues 150-454 (GNSSMARPLM…SESETAVDSN (305 aa)) are Cytoplasmic-facing. Positions 207–430 (QSESLDWFNV…EPRFQLIELP (224 aa)) constitute an SMP-LTD domain.

Belongs to the MMM1 family. In terms of assembly, homodimer. Component of the ER-mitochondria encounter structure (ERMES) or MDM complex, composed of MMM1, MDM10, MDM12 and MDM34. An MMM1 homodimer associates with one molecule of MDM12 on each side in a pairwise head-to-tail manner, and the SMP-LTD domains of MMM1 and MDM12 generate a continuous hydrophobic tunnel for phospholipid trafficking.

The protein localises to the endoplasmic reticulum membrane. In terms of biological role, component of the ERMES/MDM complex, which serves as a molecular tether to connect the endoplasmic reticulum (ER) and mitochondria. Components of this complex are involved in the control of mitochondrial shape and protein biogenesis, and function in nonvesicular lipid trafficking between the ER and mitochondria. The MDM12-MMM1 subcomplex functions in the major beta-barrel assembly pathway that is responsible for biogenesis of all outer membrane beta-barrel proteins, and acts in a late step after the SAM complex. The MDM10-MDM12-MMM1 subcomplex further acts in the TOM40-specific pathway after the action of the MDM12-MMM1 complex. Essential for establishing and maintaining the structure of mitochondria and maintenance of mtDNA nucleoids. The chain is Maintenance of mitochondrial morphology protein 1 from Komagataella phaffii (strain GS115 / ATCC 20864) (Yeast).